Consider the following 706-residue polypeptide: K(+)-insensitive pyrophosphate-energized proton pump (706 aa).

The next 5 helical transmembrane spans lie at 1–21 (MTALWVIVLCGALSIVYAIWA), 62–82 (VVIFALLAYFLGILVAIGFAI), 83–103 (GAILSGAAGFIGMNVSVRANV), 129–149 (LLVAGLALLGVTLYFIYLIHF), and 164–184 (VALGFGASLISIFARLGGGIF). Lys-186 is a binding site for substrate. Residues Asp-189, Asp-193, Asn-216, and Asp-219 each coordinate Mg(2+). The next 6 helical transmembrane spans lie at 231-251 (LFETYAVTAVATMVLAAIFFG), 263-283 (TLPLAIGGICILTSIAGTFFV), 300-320 (IATGVLSLVGVGVVIHQLIGF), 330-350 (GLALFECGIVGLAVTGLIIWI), 393-413 (IVIIAGILITYSLAGLFGIAI), and 414-434 (ATTTMLALAGMIVALDAFGPV). Residue Asp-436 coordinates Mg(2+). 4 helical membrane passes run 467 to 487 (AVTKGYAIGSAGLGALVLFAA), 516 to 536 (YVVVGLLFGGLLPYLFGAMGM), 585 to 605 (IIPSLLPVLSPIFVYFAIYAI), and 616 to 636 (AFSAVGAMLLGVIVTGLFVAI). Residues Asp-646, Asp-672, and Asp-676 each contribute to the Ca(2+) site. A substrate-binding site is contributed by Lys-679. A helical transmembrane segment spans residues 685–705 (AVNPMIKITNIVALLLLAILA).

This sequence belongs to the H(+)-translocating pyrophosphatase (TC 3.A.10) family. K(+)-insensitive subfamily. Homodimer. The cofactor is Mg(2+).

It is found in the cell inner membrane. The catalysed reaction is diphosphate + H2O + H(+)(in) = 2 phosphate + 2 H(+)(out). Functionally, proton pump that utilizes the energy of pyrophosphate hydrolysis as the driving force for proton movement across the membrane. Generates a proton motive force. This chain is K(+)-insensitive pyrophosphate-energized proton pump, found in Rhodopseudomonas palustris (strain ATCC BAA-98 / CGA009).